Reading from the N-terminus, the 556-residue chain is Formate--tetrahydrofolate ligase (556 aa).

65-72 (TSAGEGKT) is a binding site for ATP.

This sequence belongs to the formate--tetrahydrofolate ligase family.

The catalysed reaction is (6S)-5,6,7,8-tetrahydrofolate + formate + ATP = (6R)-10-formyltetrahydrofolate + ADP + phosphate. It functions in the pathway one-carbon metabolism; tetrahydrofolate interconversion. The sequence is that of Formate--tetrahydrofolate ligase from Kosmotoga olearia (strain ATCC BAA-1733 / DSM 21960 / TBF 19.5.1).